We begin with the raw amino-acid sequence, 313 residues long: 4-diphosphocytidyl-2-C-methyl-D-erythritol kinase (313 aa).

Residue lysine 10 is part of the active site. Position 95 to 105 (95 to 105 (PVTAGLGGGSS)) interacts with ATP. Aspartate 136 is an active-site residue. The segment at 289–313 (HPRVSPWRSPRSASSPSTRRSSRPT) is disordered. The span at 292-307 (VSPWRSPRSASSPSTR) shows a compositional bias: low complexity.

The protein belongs to the GHMP kinase family. IspE subfamily.

It catalyses the reaction 4-CDP-2-C-methyl-D-erythritol + ATP = 4-CDP-2-C-methyl-D-erythritol 2-phosphate + ADP + H(+). It participates in isoprenoid biosynthesis; isopentenyl diphosphate biosynthesis via DXP pathway; isopentenyl diphosphate from 1-deoxy-D-xylulose 5-phosphate: step 3/6. In terms of biological role, catalyzes the phosphorylation of the position 2 hydroxy group of 4-diphosphocytidyl-2C-methyl-D-erythritol. This is 4-diphosphocytidyl-2-C-methyl-D-erythritol kinase from Anaeromyxobacter dehalogenans (strain 2CP-C).